The following is a 242-amino-acid chain: tRNA (guanine-N(1)-)-methyltransferase (242 aa).

S-adenosyl-L-methionine-binding positions include G112 and 131 to 136 (LGDFIL).

Belongs to the RNA methyltransferase TrmD family. Homodimer.

The protein localises to the cytoplasm. It carries out the reaction guanosine(37) in tRNA + S-adenosyl-L-methionine = N(1)-methylguanosine(37) in tRNA + S-adenosyl-L-homocysteine + H(+). Functionally, specifically methylates guanosine-37 in various tRNAs. This is tRNA (guanine-N(1)-)-methyltransferase from Crocosphaera subtropica (strain ATCC 51142 / BH68) (Cyanothece sp. (strain ATCC 51142)).